The chain runs to 69 residues: U2-agatoxin-Ao1g (69 aa).

An N-terminal signal peptide occupies residues 1 to 20 (MKAIISLLLISAMVFSMIEA). Positions 21–34 (VPVEEGLQLFEGER) are excised as a propeptide. 3 disulfide bridges follow: C36–C52, C43–C57, and C51–C67. L68 is modified (leucine amide).

Belongs to the neurotoxin 01 (U2-agtx) family. As to expression, expressed by the venom gland.

The protein resides in the secreted. Its function is as follows. Insect active toxin causing rapid but reversible paralysis in crickets. No activity shown in mammals. Does not show effect on mammalian voltage-gated calcium channels. The sequence is that of U2-agatoxin-Ao1g from Agelena orientalis (Funnel-web spider).